A 240-amino-acid polypeptide reads, in one-letter code: 1-(5-phosphoribosyl)-5-[(5-phosphoribosylamino)methylideneamino] imidazole-4-carboxamide isomerase (240 aa).

D9 functions as the Proton acceptor in the catalytic mechanism. D131 serves as the catalytic Proton donor.

This sequence belongs to the HisA/HisF family.

Its subcellular location is the cytoplasm. The catalysed reaction is 1-(5-phospho-beta-D-ribosyl)-5-[(5-phospho-beta-D-ribosylamino)methylideneamino]imidazole-4-carboxamide = 5-[(5-phospho-1-deoxy-D-ribulos-1-ylimino)methylamino]-1-(5-phospho-beta-D-ribosyl)imidazole-4-carboxamide. It functions in the pathway amino-acid biosynthesis; L-histidine biosynthesis; L-histidine from 5-phospho-alpha-D-ribose 1-diphosphate: step 4/9. In Cytophaga hutchinsonii (strain ATCC 33406 / DSM 1761 / CIP 103989 / NBRC 15051 / NCIMB 9469 / D465), this protein is 1-(5-phosphoribosyl)-5-[(5-phosphoribosylamino)methylideneamino] imidazole-4-carboxamide isomerase.